Here is a 181-residue protein sequence, read N- to C-terminus: Translation initiation factor IF-3, chloroplastic (181 aa).

Belongs to the IF-3 family. In terms of assembly, monomer.

It localises to the plastid. Its subcellular location is the chloroplast. IF-3 binds to the 30S ribosomal subunit and shifts the equilibrium between 70S ribosomes and their 50S and 30S subunits in favor of the free subunits, thus enhancing the availability of 30S subunits on which protein synthesis initiation begins. This is Translation initiation factor IF-3, chloroplastic from Galdieria sulphuraria (Red alga).